The following is a 308-amino-acid chain: UPF0282 protein SSO3251 (308 aa).

The protein belongs to the UPF0282 family.

The sequence is that of UPF0282 protein SSO3251 from Saccharolobus solfataricus (strain ATCC 35092 / DSM 1617 / JCM 11322 / P2) (Sulfolobus solfataricus).